A 209-amino-acid chain; its full sequence is Lipopolysaccharide export system protein LptC (209 aa).

The chain crosses the membrane as a helical span at residues 7 to 26 (NIRWNVILGVIALCALAWFY).

The protein belongs to the LptC family. As to quaternary structure, component of the lipopolysaccharide transport and assembly complex. Interacts with LptA and the LptBFG transporter complex.

The protein resides in the cell inner membrane. Functionally, involved in the assembly of lipopolysaccharide (LPS). Required for the translocation of LPS from the inner membrane to the outer membrane. Facilitates the transfer of LPS from the inner membrane to the periplasmic protein LptA. Could be a docking site for LptA. The polypeptide is Lipopolysaccharide export system protein LptC (Haemophilus influenzae (strain ATCC 51907 / DSM 11121 / KW20 / Rd)).